A 521-amino-acid polypeptide reads, in one-letter code: Melanopsin (521 aa).

Residues 1–71 (MDSPSGPRVL…VDVPDHAHYT (71 aa)) are Extracellular-facing. N-linked (GlcNAc...) asparagine glycans are attached at residues asparagine 30 and asparagine 34. The helical transmembrane segment at 72–92 (LGTVILLVGLTGMLGNLTVIY) threads the bilayer. The Cytoplasmic portion of the chain corresponds to 93–106 (TFCRNRGLRTPANM). A helical transmembrane segment spans residues 107–127 (FIINLAVSDFLMSVTQAPVFF). The Extracellular segment spans residues 128-143 (ASSLYKKWLFGETGCE). Cysteines 142 and 220 form a disulfide. A helical transmembrane segment spans residues 144–164 (FYAFCGAVFGITSMITLTAIA). Topologically, residues 165–187 (MDRYLVITRPLATIGRGSKRRTA) are cytoplasmic. The chain crosses the membrane as a helical span at residues 188-208 (LVLLGVWLYALAWSLPPFFGW). Residues 209 to 237 (SAYVPEGLLTSCSWDYMTFTPQVRAYTML) are Extracellular-facing. Residues 238 to 258 (LFCFVFFLPLLIIIFCYIFIF) traverse the membrane as a helical segment. Residues 259 to 293 (RAIRETGRACEGCGESPLRQRRQWQRLQSEWKMAK) are Cytoplasmic-facing. The chain crosses the membrane as a helical span at residues 294–314 (VALIVILLFVLSWAPYSTVAL). At 315–329 (VAFAGYSHILTPYMS) the chain is on the extracellular side. Residues 330–350 (SVPAVIAKASAIHNPIIYAIT) form a helical membrane-spanning segment. At lysine 337 the chain carries N6-(retinylidene)lysine. Residues 351 to 521 (HPKYRVAIAQ…LEDDVTLRHL (171 aa)) are Cytoplasmic-facing. Residues 445-486 (GELKASSSPQVQRSKTPKVPGPSTCRPMKGQGARPSSLRGDQ) form a disordered region. Residues 449 to 458 (ASSSPQVQRS) are compositionally biased toward polar residues.

This sequence belongs to the G-protein coupled receptor 1 family. Opsin subfamily. As to expression, expressed in the retinal pigment epithelium and ganglion cell layer (at protein level). Also expressed in amacrine cell layers of the retina. Weakly expressed in vibrissae, and tail. In terms of tissue distribution, observed with processes in the outer strata of inner plexiform layer (IPL) close to the inner nuclear layer (INL) or is found to be bistratified with processes located both in the inner (ON) or outer (OFF) layers of the IPL (at protein level). A second population of isoform 1 is identified in processes which are confined to the inner layer of the IPL near to the ganglion cell layer (GCL) (at protein level). About 40 times more abundant than isoform 1 in the retina (at protein level). Isoform 2 is involved in processes localized to the outer IPL or is bistratified with processes in both the inner and outer layers of the IPL (at protein level). Isoform 2 is absent in the processes confined only to the inner layer of the IPL (at protein level).

It is found in the cell membrane. It localises to the cell projection. Its subcellular location is the axon. The protein localises to the dendrite. The protein resides in the perikaryon. Its function is as follows. Photoreceptor that binds cis-retinaldehydes. Contributes to pupillar reflex, photoentrainment and other non-image forming responses to light. May be involved in the optokinetic visual tracking response. May be involved in the regulation of retinal hyaloid vessel growth and regression. This chain is Melanopsin (Opn4), found in Mus musculus (Mouse).